The chain runs to 226 residues: Cell division protein SepF (226 aa).

Residues 20–116 (RAYDDAGYDK…ESLTYHTRDN (97 aa)) form a disordered region. Positions 22 to 44 (YDDAGYDKGGYRESRYRSSRYSE) are enriched in basic and acidic residues. Acidic residues predominate over residues 45–56 (DFGDEDDEDEEA). Basic and acidic residues predominate over residues 62–95 (RRGDRSRLERAAARSGDVDHNVEGEQPERVERAS). Positions 97 to 111 (RSITRSAEPSESLTY) are enriched in polar residues.

The protein belongs to the SepF family. As to quaternary structure, homodimer. Interacts with FtsZ.

The protein localises to the cytoplasm. Functionally, cell division protein that is part of the divisome complex and is recruited early to the Z-ring. Probably stimulates Z-ring formation, perhaps through the cross-linking of FtsZ protofilaments. Its function overlaps with FtsA. In Salinispora arenicola (strain CNS-205), this protein is Cell division protein SepF.